Reading from the N-terminus, the 682-residue chain is Acetyl-coenzyme A synthetase 2-like, mitochondrial (682 aa).

The N-terminal 38 residues, 1-38, are a transit peptide targeting the mitochondrion; that stretch reads MAARSLGSGVGRLLRGLQGRSGQSGWSLSVSRSTATRL. CoA-binding positions include 217–220 and threonine 334; that span reads RGGR. Lysine 389 carries the N6-acetyllysine modification. ATP is bound by residues 410-412, 434-439, aspartate 526, and arginine 541; these read GEP and DTWWQT. Serine 549 is a binding site for CoA. Position 552 (arginine 552) interacts with ATP. Lysine 635 is modified (N6-acetyllysine).

The protein belongs to the ATP-dependent AMP-binding enzyme family. In terms of assembly, interacts with SIRT3. In terms of processing, reversibly acetylated at Lys-635. The acetyl-CoA synthase activity is inhibited by acetylation and activated by deacetylation mediated by the deacetylase SIRT3. In terms of tissue distribution, highly expressed in heart, testis, kidney, skeletal muscle, lung and spleen. Detected at low levels in brain.

The protein localises to the mitochondrion matrix. The enzyme catalyses acetate + ATP + CoA = acetyl-CoA + AMP + diphosphate. The catalysed reaction is propanoate + ATP + CoA = propanoyl-CoA + AMP + diphosphate. Its activity is regulated as follows. Inhibited by acetylation at Lys-635 and activated by deacetylation mediated by the deacetylase SIRT3. In terms of biological role, catalyzes the synthesis of acetyl-CoA from short-chain fatty acids. Acetate is the preferred substrate. Can also utilize propionate with a much lower affinity. Provides acetyl-CoA that is utilized mainly for oxidation under ketogenic conditions. Involved in thermogenesis under ketogenic conditions, using acetate as a vital fuel when carbohydrate availability is insufficient. The sequence is that of Acetyl-coenzyme A synthetase 2-like, mitochondrial (Acss1) from Mus musculus (Mouse).